The following is a 180-amino-acid chain: ATP-dependent protease subunit HslV (180 aa).

Residue T7 is part of the active site. Residues A165, C168, and T171 each coordinate Na(+).

This sequence belongs to the peptidase T1B family. HslV subfamily. In terms of assembly, a double ring-shaped homohexamer of HslV is capped on each side by a ring-shaped HslU homohexamer. The assembly of the HslU/HslV complex is dependent on binding of ATP.

Its subcellular location is the cytoplasm. The enzyme catalyses ATP-dependent cleavage of peptide bonds with broad specificity.. Allosterically activated by HslU binding. Functionally, protease subunit of a proteasome-like degradation complex believed to be a general protein degrading machinery. The sequence is that of ATP-dependent protease subunit HslV from Geobacillus kaustophilus (strain HTA426).